Here is a 133-residue protein sequence, read N- to C-terminus: Large ribosomal subunit protein uL22 (133 aa).

This sequence belongs to the universal ribosomal protein uL22 family. Part of the 50S ribosomal subunit.

Functionally, this protein binds specifically to 23S rRNA; its binding is stimulated by other ribosomal proteins, e.g. L4, L17, and L20. It is important during the early stages of 50S assembly. It makes multiple contacts with different domains of the 23S rRNA in the assembled 50S subunit and ribosome. Its function is as follows. The globular domain of the protein is located near the polypeptide exit tunnel on the outside of the subunit, while an extended beta-hairpin is found that lines the wall of the exit tunnel in the center of the 70S ribosome. This chain is Large ribosomal subunit protein uL22, found in Aquifex pyrophilus.